The sequence spans 153 residues: uncharacterized protein (153 aa).

Residues 1–19 (MRKYIPLVLFIFSWPVLCA) form the signal peptide. Active-site residues include Arg46, Glu54, and Arg88.

This sequence belongs to the thermonuclease family.

This is an uncharacterized protein from Escherichia coli.